A 1375-amino-acid chain; its full sequence is DNA-directed RNA polymerase subunit beta (1375 aa).

It belongs to the RNA polymerase beta chain family. The RNAP catalytic core consists of 2 alpha, 1 beta, 1 beta' and 1 omega subunit. When a sigma factor is associated with the core the holoenzyme is formed, which can initiate transcription.

The enzyme catalyses RNA(n) + a ribonucleoside 5'-triphosphate = RNA(n+1) + diphosphate. Its function is as follows. DNA-dependent RNA polymerase catalyzes the transcription of DNA into RNA using the four ribonucleoside triphosphates as substrates. This chain is DNA-directed RNA polymerase subunit beta, found in Coxiella burnetii (strain Dugway 5J108-111).